A 129-amino-acid polypeptide reads, in one-letter code: SPbeta prophage-derived protein NrdI (129 aa).

The protein belongs to the NrdI family.

Probably involved in ribonucleotide reductase function. This chain is SPbeta prophage-derived protein NrdI (nrdIB), found in Bacillus subtilis (strain 168).